A 182-amino-acid chain; its full sequence is MIFDEFSIKTLIRPVQDFPRPGVVFRDITPLFQSPKALRMVADSLIQRYVEADFTHIGALDARGFLVGSILAYELNKPLVLFRKQGKLPADVLSQAYSTEYGEAHLEIHADSLCEGDSVLLFDDLIATGGTLLAAAQLVRRMRANIHEAAAIIDLPELGGSQKLQDIGIPTFTLTAFALSDR.

Belongs to the purine/pyrimidine phosphoribosyltransferase family. In terms of assembly, homodimer.

Its subcellular location is the cytoplasm. The catalysed reaction is AMP + diphosphate = 5-phospho-alpha-D-ribose 1-diphosphate + adenine. The protein operates within purine metabolism; AMP biosynthesis via salvage pathway; AMP from adenine: step 1/1. Catalyzes a salvage reaction resulting in the formation of AMP, that is energically less costly than de novo synthesis. The sequence is that of Adenine phosphoribosyltransferase from Stutzerimonas stutzeri (Pseudomonas stutzeri).